The chain runs to 430 residues: Adenylosuccinate synthetase (430 aa).

Residues 13-19 (GDEGKGK) and 41-43 (GHT) contribute to the GTP site. Asp14 acts as the Proton acceptor in catalysis. Mg(2+) is bound by residues Asp14 and Gly41. Residues 14–17 (DEGK), 39–42 (NAGH), Thr130, Arg144, Gln225, Thr240, and Arg304 contribute to the IMP site. His42 acts as the Proton donor in catalysis. 300–306 (STTGRAR) is a binding site for substrate. GTP-binding positions include Arg306, 332-334 (KLD), and 414-416 (STG).

This sequence belongs to the adenylosuccinate synthetase family. Homodimer. Requires Mg(2+) as cofactor.

It is found in the cytoplasm. The enzyme catalyses IMP + L-aspartate + GTP = N(6)-(1,2-dicarboxyethyl)-AMP + GDP + phosphate + 2 H(+). It participates in purine metabolism; AMP biosynthesis via de novo pathway; AMP from IMP: step 1/2. Its function is as follows. Plays an important role in the de novo pathway of purine nucleotide biosynthesis. Catalyzes the first committed step in the biosynthesis of AMP from IMP. This chain is Adenylosuccinate synthetase, found in Alcanivorax borkumensis (strain ATCC 700651 / DSM 11573 / NCIMB 13689 / SK2).